The chain runs to 200 residues: NADH-quinone oxidoreductase subunit C 1 (200 aa).

The protein belongs to the complex I 30 kDa subunit family. In terms of assembly, NDH-1 is composed of 14 different subunits. Subunits NuoB, C, D, E, F, and G constitute the peripheral sector of the complex.

It is found in the cell inner membrane. It carries out the reaction a quinone + NADH + 5 H(+)(in) = a quinol + NAD(+) + 4 H(+)(out). Functionally, NDH-1 shuttles electrons from NADH, via FMN and iron-sulfur (Fe-S) centers, to quinones in the respiratory chain. The immediate electron acceptor for the enzyme in this species is believed to be ubiquinone. Couples the redox reaction to proton translocation (for every two electrons transferred, four hydrogen ions are translocated across the cytoplasmic membrane), and thus conserves the redox energy in a proton gradient. The polypeptide is NADH-quinone oxidoreductase subunit C 1 (Rhizobium etli (strain CIAT 652)).